A 191-amino-acid polypeptide reads, in one-letter code: Glycerol-3-phosphate acyltransferase (191 aa).

5 helical membrane-spanning segments follow: residues 3–23 (YLIV…FILT), 51–71 (TLGY…VLYV), 78–98 (YIFI…WLKF), 108–128 (VGIL…SWAV), and 150–170 (YLIV…VLIF).

This sequence belongs to the PlsY family. In terms of assembly, probably interacts with PlsX.

The protein resides in the cell inner membrane. It carries out the reaction an acyl phosphate + sn-glycerol 3-phosphate = a 1-acyl-sn-glycero-3-phosphate + phosphate. The protein operates within lipid metabolism; phospholipid metabolism. Its function is as follows. Catalyzes the transfer of an acyl group from acyl-phosphate (acyl-PO(4)) to glycerol-3-phosphate (G3P) to form lysophosphatidic acid (LPA). This enzyme utilizes acyl-phosphate as fatty acyl donor, but not acyl-CoA or acyl-ACP. This Pelagibacter ubique (strain HTCC1062) protein is Glycerol-3-phosphate acyltransferase.